A 142-amino-acid polypeptide reads, in one-letter code: Hemoglobin subunit alpha (142 aa).

The Globin domain maps to Val-2–Arg-142. At Ser-4 the chain carries Phosphoserine. Lys-8 and Lys-12 each carry N6-succinyllysine. Lys-17 bears the N6-acetyllysine; alternate mark. Lys-17 carries the post-translational modification N6-succinyllysine; alternate. Tyr-25 is subject to Phosphotyrosine. Ser-36 is subject to Phosphoserine. Lys-41 is subject to N6-succinyllysine. Ser-50 is modified (phosphoserine). Residue His-59 participates in O2 binding. His-88 serves as a coordination point for heme b. Ser-103 bears the Phosphoserine mark. A Phosphothreonine modification is found at Thr-109. Residues Ser-125 and Ser-132 each carry the phosphoserine modification. Thr-135 and Thr-138 each carry phosphothreonine. A Phosphoserine modification is found at Ser-139.

The protein belongs to the globin family. Heterotetramer of two alpha chains and two beta chains. Red blood cells.

Involved in oxygen transport from the lung to the various peripheral tissues. Functionally, hemopressin acts as an antagonist peptide of the cannabinoid receptor CNR1. Hemopressin-binding efficiently blocks cannabinoid receptor CNR1 and subsequent signaling. In Chlorocebus aethiops (Green monkey), this protein is Hemoglobin subunit alpha (HBA).